The following is a 261-amino-acid chain: MKPASIASIKSQLTNGELTQKQIEELYKDSRKGVQAILKRHEKQQEKQALLKQAFIKMNTYEKEAYRNGNHYIAGVDEVGRGPLAGPVVAAAVILPKDFQLLGINDSKKLSEVQRNEFSHYIKQHAIAYQISFIDNTIIDKINIYEASKQAMKEAISGLQPYPDHALIDAVPLEGLNCTYEAIIKGDAESVHIAAASVLAKVARDDWMKELHEKYPLYGFNSNMGYGTKEHLQAIETYGVTPYHRYSFAPLHKYRHNTLLN.

An RNase H type-2 domain is found at 71–260; sequence HYIAGVDEVG…LHKYRHNTLL (190 aa). Residues D77, E78, and D169 each coordinate a divalent metal cation.

Belongs to the RNase HII family. Requires Mn(2+) as cofactor. It depends on Mg(2+) as a cofactor.

It is found in the cytoplasm. It catalyses the reaction Endonucleolytic cleavage to 5'-phosphomonoester.. Its function is as follows. Endonuclease that specifically degrades the RNA of RNA-DNA hybrids. The protein is Ribonuclease HII of Oceanobacillus iheyensis (strain DSM 14371 / CIP 107618 / JCM 11309 / KCTC 3954 / HTE831).